A 192-amino-acid chain; its full sequence is NOP protein chaperone 1 (192 aa).

Low complexity predominate over residues 1–26 (MEVSGESHSGPSCSSSSRDGSGVSVS). The interval 1–39 (MEVSGESHSGPSCSSSSRDGSGVSVSKELLMAGSGGRGG) is disordered. Phosphoserine occurs at positions 34 and 66. A disordered region spans residues 118–192 (FEMNQSHSKE…SENKEKQENK (75 aa)). Residues 129–152 (DSSEENSQDSSEESSESEDEDDST) are compositionally biased toward acidic residues. Basic and acidic residues predominate over residues 164-177 (KLPHSEDGKGKIEV). Ser180 carries the post-translational modification Phosphoserine.

As to quaternary structure, interacts with NOP58, RUVBL1 and RUVBL2; the interactions are direct and NOPCHAP1 bridges the association of NOP58 with RUVBL1:RUVBL2 even in absence of snoRNAs. The interactions with RUVBL1 and RUVBL2 are disrupted upon ATP binding.

Its subcellular location is the nucleus. In terms of biological role, client-loading PAQosome/R2TP complex cofactor that selects NOP58 to promote box C/D small nucleolar ribonucleoprotein (snoRNP) assembly. Acts as a bridge between NOP58 and the R2TP complex via RUVBL1:RUVBL2. The sequence is that of NOP protein chaperone 1 (NOPCHAP1) from Bos taurus (Bovine).